The sequence spans 151 residues: Large ribosomal subunit protein uL13 (151 aa).

It belongs to the universal ribosomal protein uL13 family. In terms of assembly, part of the 50S ribosomal subunit.

Its function is as follows. This protein is one of the early assembly proteins of the 50S ribosomal subunit, although it is not seen to bind rRNA by itself. It is important during the early stages of 50S assembly. This Synechococcus elongatus (strain ATCC 33912 / PCC 7942 / FACHB-805) (Anacystis nidulans R2) protein is Large ribosomal subunit protein uL13.